The following is a 358-amino-acid chain: Dual-specificity RNA methyltransferase RlmN (358 aa).

Glu91 functions as the Proton acceptor in the catalytic mechanism. One can recognise a Radical SAM core domain in the interval 102–337 (GNIRITQCLS…TILRKSKGQD (236 aa)). An intrachain disulfide couples Cys109 to Cys342. [4Fe-4S] cluster-binding residues include Cys116, Cys120, and Cys123. Residues 169–170 (GE), Ser201, 223–225 (SLH), and Asn299 each bind S-adenosyl-L-methionine. Cys342 (S-methylcysteine intermediate) is an active-site residue.

It belongs to the radical SAM superfamily. RlmN family. It depends on [4Fe-4S] cluster as a cofactor.

It is found in the cytoplasm. It carries out the reaction adenosine(2503) in 23S rRNA + 2 reduced [2Fe-2S]-[ferredoxin] + 2 S-adenosyl-L-methionine = 2-methyladenosine(2503) in 23S rRNA + 5'-deoxyadenosine + L-methionine + 2 oxidized [2Fe-2S]-[ferredoxin] + S-adenosyl-L-homocysteine. The enzyme catalyses adenosine(37) in tRNA + 2 reduced [2Fe-2S]-[ferredoxin] + 2 S-adenosyl-L-methionine = 2-methyladenosine(37) in tRNA + 5'-deoxyadenosine + L-methionine + 2 oxidized [2Fe-2S]-[ferredoxin] + S-adenosyl-L-homocysteine. Functionally, specifically methylates position 2 of adenine 2503 in 23S rRNA and position 2 of adenine 37 in tRNAs. m2A2503 modification seems to play a crucial role in the proofreading step occurring at the peptidyl transferase center and thus would serve to optimize ribosomal fidelity. This is Dual-specificity RNA methyltransferase RlmN from Lawsonia intracellularis (strain PHE/MN1-00).